The primary structure comprises 94 residues: Large ribosomal subunit protein bL28A (94 aa).

The interval G63 to L94 is disordered. Residues R72–R82 are compositionally biased toward low complexity. Residues A84–L94 show a composition bias toward polar residues.

The protein belongs to the bacterial ribosomal protein bL28 family.

This chain is Large ribosomal subunit protein bL28A (rpmB1), found in Mycobacterium bovis (strain ATCC BAA-935 / AF2122/97).